We begin with the raw amino-acid sequence, 174 residues long: Ribosome maturation factor RimM (174 aa).

Residues 97 to 171 enclose the PRC barrel domain; sequence EGYYYDFDII…RMVIDPIPGL (75 aa).

It belongs to the RimM family. As to quaternary structure, binds ribosomal protein uS19.

The protein localises to the cytoplasm. In terms of biological role, an accessory protein needed during the final step in the assembly of 30S ribosomal subunit, possibly for assembly of the head region. Essential for efficient processing of 16S rRNA. May be needed both before and after RbfA during the maturation of 16S rRNA. It has affinity for free ribosomal 30S subunits but not for 70S ribosomes. In Symbiobacterium thermophilum (strain DSM 24528 / JCM 14929 / IAM 14863 / T), this protein is Ribosome maturation factor RimM.